Consider the following 361-residue polypeptide: Phosphoserine aminotransferase (361 aa).

Position 43 (R43) interacts with L-glutamate. Pyridoxal 5'-phosphate-binding positions include 77-78 (AS), W103, T153, D173, and Q196. K197 bears the N6-(pyridoxal phosphate)lysine mark. A pyridoxal 5'-phosphate-binding site is contributed by 238 to 239 (NT).

This sequence belongs to the class-V pyridoxal-phosphate-dependent aminotransferase family. SerC subfamily. Homodimer. The cofactor is pyridoxal 5'-phosphate.

It localises to the cytoplasm. The enzyme catalyses O-phospho-L-serine + 2-oxoglutarate = 3-phosphooxypyruvate + L-glutamate. The catalysed reaction is 4-(phosphooxy)-L-threonine + 2-oxoglutarate = (R)-3-hydroxy-2-oxo-4-phosphooxybutanoate + L-glutamate. The protein operates within amino-acid biosynthesis; L-serine biosynthesis; L-serine from 3-phospho-D-glycerate: step 2/3. It participates in cofactor biosynthesis; pyridoxine 5'-phosphate biosynthesis; pyridoxine 5'-phosphate from D-erythrose 4-phosphate: step 3/5. Functionally, catalyzes the reversible conversion of 3-phosphohydroxypyruvate to phosphoserine and of 3-hydroxy-2-oxo-4-phosphonooxybutanoate to phosphohydroxythreonine. This Pseudomonas aeruginosa (strain ATCC 15692 / DSM 22644 / CIP 104116 / JCM 14847 / LMG 12228 / 1C / PRS 101 / PAO1) protein is Phosphoserine aminotransferase.